The sequence spans 201 residues: Ependymin-related protein 2 (201 aa).

The first 21 residues, 1–21 (MILQVVLLLACLSGAIVSTGA), serve as a signal peptide directing secretion. Residues Asn38 and Asn137 are each glycosylated (N-linked (GlcNAc...) asparagine). A Microbody targeting signal motif is present at residues 199-201 (CRA).

Belongs to the ependymin family. Component of the acid-soluble and acid-insoluble organic matrix of calcified shell layers (at protein level).

It localises to the secreted. In Haliotis asinina (Donkey's ear abalone), this protein is Ependymin-related protein 2.